The primary structure comprises 297 residues: MVSIKVSLADFIVKTEEGWIPSDNCPALDRFKTKTEKELLDSIKKEGADRASIRKQLFLTSISNKRLTQLGGVPVRDIRTSTTIPSSTRNLITDWLLNIFNDEESGEEVESAIASKYPDIFCSADKISRVAQRLENRRDRVHEDGFRILSATMLAIDSDIATEGKCEIVRATEDAIIAKFEPVSEHLCIGNPRGVFYKAFPIKKEQPMVYGVKALLGISNRDFIMNHGHGHLRTVPYSEINNAVRSFAKKNEAEIKRIRSDSLSPNAGEKFINMCDMLLQKEKIETVIAKIMKSDKN.

ATP-binding positions include 119–121 (DIF), lysine 198, and 227–229 (HGH). The tract at residues 212–247 (VKALLGISNRDFIMNHGHGHLRTVPYSEINNAVRSF) is RNA-binding. The active-site For NTPase and RTPase activities is the histidine 231. Arginine 233 lines the ATP pocket.

This sequence belongs to the rotavirus NSP2 family. In terms of assembly, homooctamer. Interacts with VP1; this interaction is weak. Interacts with NSP5; this interaction leads to up-regulation of NSP5 phosphorylation and formation of viral factories. Mg(2+) is required as a cofactor.

It localises to the host cytoplasm. Its function is as follows. Participates in replication and packaging of the viral genome. Plays a crucial role, together with NSP5, in the formation of virus factories (viroplasms) which are large inclusions in the host cytoplasm where replication intermediates are assembled and viral RNA replication takes place. Displays ssRNA binding, NTPase, RNA triphosphatase (RTPase) and ATP-independent helix-unwinding activities. The unwinding activity may prepare and organize plus-strand RNAs for packaging and replication by removing interfering secondary structures. The RTPase activity plays a role in the removal of the gamma-phosphate from the rotavirus RNA minus strands of dsRNA genome segments. The protein is Non-structural protein 2 of Homo sapiens (Human).